The sequence spans 382 residues: Anhydro-N-acetylmuramic acid kinase (382 aa).

ATP is bound at residue 22 to 29 (GTSMDGVD).

Belongs to the anhydro-N-acetylmuramic acid kinase family.

The enzyme catalyses 1,6-anhydro-N-acetyl-beta-muramate + ATP + H2O = N-acetyl-D-muramate 6-phosphate + ADP + H(+). Its pathway is amino-sugar metabolism; 1,6-anhydro-N-acetylmuramate degradation. The protein operates within cell wall biogenesis; peptidoglycan recycling. Catalyzes the specific phosphorylation of 1,6-anhydro-N-acetylmuramic acid (anhMurNAc) with the simultaneous cleavage of the 1,6-anhydro ring, generating MurNAc-6-P. Is required for the utilization of anhMurNAc either imported from the medium or derived from its own cell wall murein, and thus plays a role in cell wall recycling. This is Anhydro-N-acetylmuramic acid kinase from Burkholderia orbicola (strain MC0-3).